The chain runs to 332 residues: tRNA(Ile)-lysidine synthase (332 aa).

39–44 (SGGADS) provides a ligand contact to ATP.

This sequence belongs to the tRNA(Ile)-lysidine synthase family.

Its subcellular location is the cytoplasm. The enzyme catalyses cytidine(34) in tRNA(Ile2) + L-lysine + ATP = lysidine(34) in tRNA(Ile2) + AMP + diphosphate + H(+). Ligates lysine onto the cytidine present at position 34 of the AUA codon-specific tRNA(Ile) that contains the anticodon CAU, in an ATP-dependent manner. Cytidine is converted to lysidine, thus changing the amino acid specificity of the tRNA from methionine to isoleucine. This Leifsonia xyli subsp. xyli (strain CTCB07) protein is tRNA(Ile)-lysidine synthase.